The following is a 577-amino-acid chain: Arginine--tRNA ligase (577 aa).

The 'HIGH' region signature appears at 122–132; sequence PNVAKEMHVGH.

This sequence belongs to the class-I aminoacyl-tRNA synthetase family. Monomer.

It localises to the cytoplasm. The enzyme catalyses tRNA(Arg) + L-arginine + ATP = L-arginyl-tRNA(Arg) + AMP + diphosphate. The chain is Arginine--tRNA ligase from Escherichia coli O157:H7 (strain EC4115 / EHEC).